Here is a 267-residue protein sequence, read N- to C-terminus: RWD domain-containing protein 3 (267 aa).

The 108-residue stretch at 7-114 folds into the RWD domain; it reads QELSALAAIF…LWTQQNLRHI (108 aa). 2 interaction with UBE2I/UBC9 regions span residues 13–15 and 100–102; these read AAI and VHE.

In terms of assembly, interacts with UBE2I/UBC9, NFKBIA, HIF1A and NCOA2.

The protein resides in the nucleus. It localises to the cytoplasm. In terms of biological role, enhancer of SUMO conjugation. Via its interaction with UBE2I/UBC9, increases SUMO conjugation to proteins by promoting the binding of E1 and E2 enzymes, thioester linkage between SUMO and UBE2I/UBC9 and transfer of SUMO to specific target proteins which include HIF1A, PIAS, NFKBIA, NR3C1 and TOP1. Positively regulates the NF-kappa-B signaling pathway by enhancing the sumoylation of NF-kappa-B inhibitor alpha (NFKBIA), promoting its stabilization which consequently leads to an increased inhibition of NF-kappa-B transcriptional activity. Negatively regulates the hypoxia-inducible factor-1 alpha (HIF1A) signaling pathway by increasing the sumoylation of HIF1A, promoting its stabilization, transcriptional activity and the expression of its target gene VEGFA during hypoxia. Has no effect on ubiquitination. The chain is RWD domain-containing protein 3 (Rwdd3) from Rattus norvegicus (Rat).